A 310-amino-acid polypeptide reads, in one-letter code: Iron ABC transporter substrate-binding lipoprotein MtsA (310 aa).

Positions 1–20 are cleaved as a signal peptide; sequence MGKRMSLILGAFLSVFLLVA. Residue Cys21 is the site of N-palmitoyl cysteine attachment. The S-diacylglycerol cysteine moiety is linked to residue Cys21. The Fe(2+) site is built by His68, His140, Glu206, and Asp281.

The protein belongs to the bacterial solute-binding protein 9 family. Lipoprotein receptor antigen (Lrai) subfamily.

It localises to the cell membrane. Functionally, part of the ATP-binding cassette (ABC) transport system MtsABC involved in iron import. Binds iron with high affinity and specificity and delivers it to the membrane permease for translocation into the cytoplasm. Has low affinity for Zn(2+) and Cu(2+). The sequence is that of Iron ABC transporter substrate-binding lipoprotein MtsA (mtsA) from Streptococcus pyogenes serotype M1.